We begin with the raw amino-acid sequence, 175 residues long: Orotate phosphoribosyltransferase (175 aa).

5-phospho-alpha-D-ribose 1-diphosphate-binding positions include Arg88, Lys89, Lys92, and 114–122 (EDVVTTARG). Positions 118 and 146 each coordinate orotate.

Belongs to the purine/pyrimidine phosphoribosyltransferase family. PyrE subfamily. In terms of assembly, homodimer. It depends on Mg(2+) as a cofactor.

It catalyses the reaction orotidine 5'-phosphate + diphosphate = orotate + 5-phospho-alpha-D-ribose 1-diphosphate. The protein operates within pyrimidine metabolism; UMP biosynthesis via de novo pathway; UMP from orotate: step 1/2. In terms of biological role, catalyzes the transfer of a ribosyl phosphate group from 5-phosphoribose 1-diphosphate to orotate, leading to the formation of orotidine monophosphate (OMP). The sequence is that of Orotate phosphoribosyltransferase from Methanocella arvoryzae (strain DSM 22066 / NBRC 105507 / MRE50).